The primary structure comprises 417 residues: NADH-quinone oxidoreductase subunit D (417 aa).

Belongs to the complex I 49 kDa subunit family. In terms of assembly, NDH-1 is composed of 14 different subunits. Subunits NuoB, C, D, E, F, and G constitute the peripheral sector of the complex.

Its subcellular location is the cell inner membrane. It catalyses the reaction a quinone + NADH + 5 H(+)(in) = a quinol + NAD(+) + 4 H(+)(out). NDH-1 shuttles electrons from NADH, via FMN and iron-sulfur (Fe-S) centers, to quinones in the respiratory chain. The immediate electron acceptor for the enzyme in this species is believed to be ubiquinone. Couples the redox reaction to proton translocation (for every two electrons transferred, four hydrogen ions are translocated across the cytoplasmic membrane), and thus conserves the redox energy in a proton gradient. The protein is NADH-quinone oxidoreductase subunit D of Burkholderia lata (strain ATCC 17760 / DSM 23089 / LMG 22485 / NCIMB 9086 / R18194 / 383).